The sequence spans 254 residues: Imidazole glycerol phosphate synthase subunit HisF (254 aa).

Active-site residues include Asp-12 and Asp-131.

Belongs to the HisA/HisF family. As to quaternary structure, heterodimer of HisH and HisF.

The protein resides in the cytoplasm. The catalysed reaction is 5-[(5-phospho-1-deoxy-D-ribulos-1-ylimino)methylamino]-1-(5-phospho-beta-D-ribosyl)imidazole-4-carboxamide + L-glutamine = D-erythro-1-(imidazol-4-yl)glycerol 3-phosphate + 5-amino-1-(5-phospho-beta-D-ribosyl)imidazole-4-carboxamide + L-glutamate + H(+). It functions in the pathway amino-acid biosynthesis; L-histidine biosynthesis; L-histidine from 5-phospho-alpha-D-ribose 1-diphosphate: step 5/9. Its function is as follows. IGPS catalyzes the conversion of PRFAR and glutamine to IGP, AICAR and glutamate. The HisF subunit catalyzes the cyclization activity that produces IGP and AICAR from PRFAR using the ammonia provided by the HisH subunit. In Kocuria rhizophila (strain ATCC 9341 / DSM 348 / NBRC 103217 / DC2201), this protein is Imidazole glycerol phosphate synthase subunit HisF.